The sequence spans 154 residues: Putative F-box protein At2g11200 (154 aa).

Positions 5 to 51 (TTAMSDLPRDLEEEVLSRVQLASLRAVRTTCKKWNRRLSKYRFTKKY) constitute an F-box domain.

The sequence is that of Putative F-box protein At2g11200 from Arabidopsis thaliana (Mouse-ear cress).